The following is a 1498-amino-acid chain: DNA-directed RNA polymerase subunit beta' (1498 aa).

Positions 67, 69, 82, and 85 each coordinate Zn(2+). Positions 499, 501, and 503 each coordinate Mg(2+). Cys867, Cys943, Cys950, and Cys953 together coordinate Zn(2+).

It belongs to the RNA polymerase beta' chain family. As to quaternary structure, the RNAP catalytic core consists of 2 alpha, 1 beta, 1 beta' and 1 omega subunit. When a sigma factor is associated with the core the holoenzyme is formed, which can initiate transcription. Mg(2+) is required as a cofactor. Requires Zn(2+) as cofactor.

The catalysed reaction is RNA(n) + a ribonucleoside 5'-triphosphate = RNA(n+1) + diphosphate. DNA-dependent RNA polymerase catalyzes the transcription of DNA into RNA using the four ribonucleoside triphosphates as substrates. The sequence is that of DNA-directed RNA polymerase subunit beta' from Chlorobium luteolum (strain DSM 273 / BCRC 81028 / 2530) (Pelodictyon luteolum).